Consider the following 286-residue polypeptide: Pyridoxal kinase PdxY (286 aa).

Substrate is bound at residue Ser-8. The ATP site is built by Asp-110 and Glu-147. Residue Asp-223 participates in substrate binding.

This sequence belongs to the pyridoxine kinase family. PdxY subfamily. As to quaternary structure, homodimer. It depends on Mg(2+) as a cofactor.

It carries out the reaction pyridoxal + ATP = pyridoxal 5'-phosphate + ADP + H(+). Its pathway is cofactor metabolism; pyridoxal 5'-phosphate salvage; pyridoxal 5'-phosphate from pyridoxal: step 1/1. Functionally, pyridoxal kinase involved in the salvage pathway of pyridoxal 5'-phosphate (PLP). Catalyzes the phosphorylation of pyridoxal to PLP. The chain is Pyridoxal kinase PdxY from Granulibacter bethesdensis (strain ATCC BAA-1260 / CGDNIH1).